The sequence spans 648 residues: Probable potassium transport system protein Kup 1 (648 aa).

Residues 1–31 are disordered; the sequence is MSDAVTDADGSSAQSHAQSAGHHAVQGHGGH. Residues 10 to 26 show a composition bias toward low complexity; it reads GSSAQSHAQSAGHHAVQ. 12 consecutive transmembrane segments (helical) span residues 39-59, 73-93, 130-150, 165-185, 193-213, 243-263, 275-295, 317-337, 364-384, 394-414, 421-441, and 446-466; these read LAVGAIGVVFGDIGTSPLYAL, LLHIYGIISLMFWSMMIIVTF, IILLGVFATALFYGDSMITPA, PDMHPLIVPLVVGILIGLFFI, VAAFFGPIMLVYFGTIAVLGA, FLAMGAAVLAVTGAEALYADM, WLVFVLPALVLNYLGQASLLI, LLFIASCAAVIASQAVISGAF, IFIPVINWALMIAVILLVLVF, YGIAVTGAMLIDNFLLAVVLF, APAAIAMLAVFFAIDAAYLGA, and IPDGGWVPLVMGIAIFTLLTT.

Belongs to the HAK/KUP transporter (TC 2.A.72) family.

The protein resides in the cell inner membrane. It carries out the reaction K(+)(in) + H(+)(in) = K(+)(out) + H(+)(out). Its function is as follows. Transport of potassium into the cell. Likely operates as a K(+):H(+) symporter. This Novosphingobium aromaticivorans (strain ATCC 700278 / DSM 12444 / CCUG 56034 / CIP 105152 / NBRC 16084 / F199) protein is Probable potassium transport system protein Kup 1.